A 264-amino-acid polypeptide reads, in one-letter code: MILQLDNVSLKRNGKWILKDIHWKVEEKENWVLYGLNGAGKTALLNMLCSYYFPTSGEMQVLGHEFGKTELGEKLRRKIGLVSAALQQKLYPADSAFEIALSGAYASIGLYETPSKETREKAIGLLEDLGAIEYADRRYETLSQGEKQRALIARALMADPELLILDEPVTGLDFIAREKLLDTITYIANKENAPSILYVTHHAEEILPVFDKALLLKQGEVFGSGEIKEMLTDQILSAFFDTPIHVLWNQDRPFLTRAEPITNA.

The 241-residue stretch at 3–243 folds into the ABC transporter domain; the sequence is LQLDNVSLKR…QILSAFFDTP (241 aa). An ATP-binding site is contributed by 35–42; that stretch reads GLNGAGKT.

This sequence belongs to the ABC transporter superfamily.

This is an uncharacterized protein from Bacillus subtilis (strain 168).